Here is a 420-residue protein sequence, read N- to C-terminus: Alpha-ketoglutarate-dependent xanthine dioxygenase xan-1 (420 aa).

Positions 157 and 159 each coordinate Fe cation. Residues Thr206 and Trp336 each contribute to the 2-oxoglutarate site. His351 is a binding site for Fe cation. Arg366 provides a ligand contact to 2-oxoglutarate. Arg366 contacts substrate.

It belongs to the TfdA dioxygenase family. It depends on Fe(2+) as a cofactor.

The protein localises to the cytoplasm. It is found in the cytosol. It carries out the reaction xanthine + 2-oxoglutarate + O2 = urate + succinate + CO2. Its function is as follows. Alpha-ketoglutarate-dependent xanthine dioxygenase is a non-heme mononuclear Fe(2+) enzyme that decarboxylates alpha-ketoglutarate to succinate and CO(2) while hydroxylating xanthine to generate uric acid. Allows xanthine utilization as a nitrogen source. This chain is Alpha-ketoglutarate-dependent xanthine dioxygenase xan-1, found in Neurospora crassa (strain ATCC 24698 / 74-OR23-1A / CBS 708.71 / DSM 1257 / FGSC 987).